Reading from the N-terminus, the 433-residue chain is Alpha-(1-&gt;3)-arabinofuranosyltransferase (433 aa).

Helical transmembrane passes span 118–138 (LFISINTAAILVAAYLLLRMF), 140–160 (FTLTSVAAPALILAMFATETV), 164–184 (LVFTNINGCILLLEVLFLRWL), 197–217 (LAIGLTLVLKPLLGPLLLLPL), 224–244 (ALVAAVVVPVVVNVAALPLVS), 280–300 (WLILFLRILFTAITFGALWLL), 310–330 (LFWFTTSSGVLLLWSWLVMSL), 333–353 (GYYSMMLFPFLMTVVLPNSVI), 356–376 (WPAWLGVYGFMTLDRWLLFNW), and 385–405 (YLKITYGWSLLLIVTFTVLYF).

Belongs to the glycosyltransferase 87 family.

Its subcellular location is the cell membrane. It catalyses the reaction Adds an alpha-D-arabinofuranosyl group from trans,octacis-decaprenylphospho-beta-D-arabinofuranose at the 3-O-position of an alpha-(1-&gt;5)-arabinofuranan chain attached to a beta-(1-&gt;5)-galactofuranan chain.. Its pathway is cell wall biogenesis; cell wall polysaccharide biosynthesis. Its function is as follows. Involved in the biosynthesis of the arabinogalactan (AG) region of the mycolylarabinogalactan-peptidoglycan (mAGP) complex, an essential component of the mycobacterial cell wall. Catalyzes the addition of an arabinofuranosyl (Araf) residue from the sugar donor beta-D-arabinofuranosyl-1-monophosphoryldecaprenol (DPA) on the C-3 of an alpha-(1-&gt;5)-linked Araf from the arabinan backbone of AG. The polypeptide is Alpha-(1-&gt;3)-arabinofuranosyltransferase (aftC) (Mycobacterium tuberculosis (strain CDC 1551 / Oshkosh)).